The sequence spans 293 residues: Histone H3-like centromeric protein CSE4 (293 aa).

Residues 132–141 (QDLSYDESDY) show a composition bias toward acidic residues. The interval 132-169 (QDLSYDESDYSDPLQEIDSNYRESPRRTTDKILKSSSK) is disordered. Residues 150 to 164 (SNYRESPRRTTDKIL) show a composition bias toward basic and acidic residues. Residues 157-291 (RRTTDKILKS…VQLARRIRGQ (135 aa)) are H3-like.

The protein belongs to the histone H3 family. Component of centromeric nucleosomes, where DNA is wrapped around a histone octamer core. The octamer contains two molecules each of H2A, H2B, CSE4/CENPA and H4 assembled in one CSE4-H4 heterotetramer and two H2A-H2B heterodimers. Interacts with the inner kinetochore. Post-translationally, ubiquitinated. Is degraded through ubiquitin-mediated proteolysis when not protected by its association to the kinetochore.

Its subcellular location is the nucleus. It is found in the chromosome. The protein localises to the centromere. Functionally, histone H3-like nucleosomal protein that is specifically found in centromeric nucleosomes. Replaces conventional H3 in the nucleosome core of centromeric chromatin that serves as an assembly site for the inner kinetochore. Required for recruitment and assembly of kinetochore proteins, mitotic progression and chromosome segregation. May serve as an epigenetic mark that propagates centromere identity through replication and cell division. The polypeptide is Histone H3-like centromeric protein CSE4 (CSE4) (Monosporozyma servazzii (Yeast)).